The chain runs to 348 residues: MARHASSASESSGGVSSNSAAIAAASSCRGTTCSMAAHIPSRLSTFGGGISPVSVSTCSLVVSNTTWNAVANFADARSTRGRDFSFSFALSRSALASSFVAISTSSRSSASSTARDVRYTVVASSVARRRASECRRSSDALPSTPYRDSSASRRGGIRDTSTAPIPNAAISSARSSARFICGPDTRTGPRLSRSSSETRSPGGTVQPKSPAPLAARCSASRAGCPTAAGSLLPAPRPPASSASSPQAAAPAAPSATRLPRRTTPSAPRPSSRPARPPIPAARPPPRRTPGTPRPAAARARAPAGCSPARRTPSAPTDRRCRAARRGSPRPPAARPPGRQGTRRDSARL.

Residues 132–348 are disordered; that stretch reads SECRRSSDAL…QGTRRDSARL (217 aa). Positions 161–178 are enriched in low complexity; that stretch reads STAPIPNAAISSARSSAR. Polar residues predominate over residues 192–207; it reads SRSSSETRSPGGTVQP. Low complexity predominate over residues 227–273; the sequence is AAGSLLPAPRPPASSASSPQAAAPAAPSATRLPRRTTPSAPRPSSRP. Pro residues predominate over residues 274 to 287; it reads ARPPIPAARPPPRR. Over residues 288–310 the composition is skewed to low complexity; it reads TPGTPRPAAARARAPAGCSPARR.

This is an uncharacterized protein from Streptomyces fradiae (Streptomyces roseoflavus).